The primary structure comprises 75 residues: Phytosulfokines 3 (75 aa).

A signal peptide spans 1 to 22 (MSPKVIAICLVALLLPISISHG). A propeptide spanning residues 23-66 (GRIGPIEPSKASSKVVERGNYDGRVEGCEEDDCLVERLLVAHLD) is cleaved from the precursor. 2 positions are modified to sulfotyrosine: Tyr-67 and Tyr-69. A propeptide spanning residues 72–75 (GKHN) is cleaved from the precursor.

It belongs to the phytosulfokine family. Post-translationally, sulfation is important for activity and for the binding to a putative membrane receptor. PSK-alpha is produced by endopeptidase digestion. PSK-beta is produced from PSK-alpha by exopeptidase digestion.

The protein localises to the secreted. Its function is as follows. Promotes plant cell differentiation, organogenesis and somatic embryogenesis as well as cell proliferation. The protein is Phytosulfokines 3 (PSK3) of Oryza sativa subsp. japonica (Rice).